A 270-amino-acid polypeptide reads, in one-letter code: Phosphonates import ATP-binding protein PhnC (270 aa).

The ABC transporter domain maps to 2–245; that stretch reads LVIEGLTCRF…IARELYDLEA (244 aa). 34–41 contacts ATP; the sequence is GRSGAGKS.

This sequence belongs to the ABC transporter superfamily. Phosphonates importer (TC 3.A.1.9.1) family. As to quaternary structure, the complex is composed of two ATP-binding proteins (PhnC), two transmembrane proteins (PhnE) and a solute-binding protein (PhnD).

The protein resides in the cell inner membrane. It catalyses the reaction phosphonate(out) + ATP + H2O = phosphonate(in) + ADP + phosphate + H(+). Its function is as follows. Part of the ABC transporter complex PhnCDE involved in phosphonates import. Responsible for energy coupling to the transport system. This chain is Phosphonates import ATP-binding protein PhnC, found in Rhodopseudomonas palustris (strain BisB5).